The chain runs to 341 residues: Shk1 kinase-binding protein 15 (341 aa).

WD repeat units lie at residues 33 to 70, 77 to 114, 119 to 157, 197 to 234, and 237 to 274; these read AHEGALTALAVDGIYLASTSSDETIKIFDHTRNVQIAD, IANACIRDMCFTKNHLLACHDNGQISMWSKGSWLLVHT, SHKGITGIAVHPSEKLALTVGGDGKLRLWDLVRGKGGKV, SSKSQLNALCLYQSKLIVGRDNGTVLVLDTSDGKILHE, and AHKKRVKSVYPVDDYLITASSDGSVCIWDKDWNLVIEH. The disordered stretch occupies residues 293–341; the sequence is NSEPKNVEDEAAKRQSLDSETSETSSESESESEYYSTSKQPPVKRTKHA. Residues 297–309 show a composition bias toward basic and acidic residues; sequence KNVEDEAAKRQSL.

Functionally, negatively regulates pak1/shk1 kinase activity leading to proper execution of cytoskeletal remodeling and cytokinetic functions. In terms of biological role, interacts with pak1/shk1. In Schizosaccharomyces pombe (strain 972 / ATCC 24843) (Fission yeast), this protein is Shk1 kinase-binding protein 15 (skb15).